The chain runs to 99 residues: YcgL domain-containing protein HD_1373 (99 aa).

The 85-residue stretch at Asn-8–Leu-92 folds into the YcgL domain.

The chain is YcgL domain-containing protein HD_1373 from Haemophilus ducreyi (strain 35000HP / ATCC 700724).